Here is a 37-residue protein sequence, read N- to C-terminus: Cytochrome b6-f complex subunit 5 (37 aa).

A helical transmembrane segment spans residues 5-25; it reads FLFGIVLGLIPITLTGLFVTA.

It belongs to the PetG family. The 4 large subunits of the cytochrome b6-f complex are cytochrome b6, subunit IV (17 kDa polypeptide, PetD), cytochrome f and the Rieske protein, while the 4 small subunits are PetG, PetL, PetM and PetN. The complex functions as a dimer.

Its subcellular location is the plastid. The protein localises to the chloroplast thylakoid membrane. Its function is as follows. Component of the cytochrome b6-f complex, which mediates electron transfer between photosystem II (PSII) and photosystem I (PSI), cyclic electron flow around PSI, and state transitions. PetG is required for either the stability or assembly of the cytochrome b6-f complex. This chain is Cytochrome b6-f complex subunit 5, found in Phalaenopsis aphrodite subsp. formosana (Moth orchid).